Consider the following 305-residue polypeptide: Acyl transferase (305 aa).

Active-site charge relay system residues include Ser-114, Asp-211, and His-241.

Belongs to the LuxD family.

Its pathway is lipid metabolism; fatty acid reduction for biolumincescence. Its function is as follows. Acyl transferase is part of the fatty acid reductase system required for aldehyde biosynthesis; it produces fatty acids for the luminescent reaction. This chain is Acyl transferase (luxD), found in Vibrio harveyi (Beneckea harveyi).